The chain runs to 261 residues: uncharacterized protein (261 aa).

An N-acetyltransferase domain is found at 135–261 (LVLKRIDEDI…VTEYTIYYSG (127 aa)).

This sequence belongs to the acetyltransferase family.

This is an uncharacterized protein from Bacillus subtilis (strain 168).